The primary structure comprises 349 residues: Arginine kinase (349 aa).

Residues 3-85 (DLAELWEKVS…LGPVILDYHK (83 aa)) form the Phosphagen kinase N-terminal domain. Residue 58–62 (GVGVY) participates in substrate binding. The region spanning 113–349 (WIVSTRVRVG…EEIIKLEKAA (237 aa)) is the Phosphagen kinase C-terminal domain. ATP is bound by residues 116–120 (STRVR) and His179. Glu219 is a binding site for substrate. Residue Arg223 participates in ATP binding. Cys265 serves as a coordination point for substrate. ATP is bound by residues 274–278 (RASVH) and 302–307 (RGIHGE). Substrate is bound at residue Glu307.

This sequence belongs to the ATP:guanido phosphotransferase family.

The catalysed reaction is L-arginine + ATP = N(omega)-phospho-L-arginine + ADP + H(+). This is Arginine kinase from Liolophura japonica (Chiton).